The chain runs to 549 residues: Protein EPD1 (549 aa).

The signal sequence occupies residues 1–22 (MLLNSLFPSILAAATFVTSAAA). N-linked (GlcNAc...) asparagine glycans are attached at residues Asn-40 and Asn-59. Cys-72 and Cys-101 are joined by a disulfide. Asn-147 and Asn-163 each carry an N-linked (GlcNAc...) asparagine glycan. Cystine bridges form between Cys-214–Cys-347, Cys-232–Cys-263, Cys-369–Cys-420, Cys-378–Cys-444, and Cys-397–Cys-402. Over residues 336–356 (AESASGVSRTSCPTNTDNWEA) the composition is skewed to polar residues. The disordered stretch occupies residues 336-361 (AESASGVSRTSCPTNTDNWEASTELP). The N-linked (GlcNAc...) asparagine glycan is linked to Asn-383. Asn-408 and Asn-438 each carry an N-linked (GlcNAc...) asparagine glycan. The tract at residues 479 to 519 (SVRTDTSEATTDSGSGSSNSGSASSSKSTSSSTSSGSSGSK) is disordered. Residues 487–519 (ATTDSGSGSSNSGSASSSKSTSSSTSSGSSGSK) are compositionally biased toward low complexity.

Belongs to the glycosyl hydrolase 72 family.

It is found in the cell membrane. This Candida maltosa (Yeast) protein is Protein EPD1 (EPD1).